A 247-amino-acid chain; its full sequence is Acidic leucine-rich nuclear phosphoprotein 32 family member A (247 aa).

Residue Thr-15 is modified to Phosphothreonine. Ser-17 bears the Phosphoserine mark. LRR repeat units follow at residues 18 to 41 (DVKE…TDEF), 43 to 64 (ELEF…PKLN), 65 to 87 (KLKK…AEKC), and 89 to 110 (NLKH…EPLK). The region spanning 123-161 (CEVTNLNAYRENVFKLLPQVMYLDGYDRDNKEAPDSDVE) is the LRRCT domain. The tract at residues 150–172 (RDNKEAPDSDVEGYVEDDDEEDE) is necessary for tumor-suppressive function. Positions 150–247 (RDNKEAPDSD…EPDDEGQEDD (98 aa)) are disordered. Residues 157 to 230 (DSDVEGYVED…EDEEDAAEEE (74 aa)) are compositionally biased toward acidic residues. Residues Ser-158 and Ser-202 each carry the phosphoserine modification. The segment at 165-247 (EDDDEEDEDE…EPDDEGQEDD (83 aa)) is interaction with E4F1.

It belongs to the ANP32 family. As to quaternary structure, component of the SET complex, composed of at least ANP32A, APEX1, HMGB2, NME1, SET and TREX1. Directly interacts with SET. Interacts with ATXN1/SCA1. Interacts with MAP1B. Interacts with ELAVL1. Part of the INHAT (inhibitor of histone acetyltransferases) complex. Interacts with E4F1. Phosphorylated on serine residues, at least in part by casein kinase 2/CK2. In terms of processing, some glutamate residues are glycylated by TTLL8. This modification occurs exclusively on glutamate residues and results in a glycine chain on the gamma-carboxyl group. Widely distributed in the central nervous system, with an abundant expression in the cerebellum.

The protein localises to the nucleus. The protein resides in the cytoplasm. It localises to the endoplasmic reticulum. Its function is as follows. Multifunctional protein that is involved in the regulation of many processes including tumor suppression, apoptosis, cell cycle progression or transcription. Promotes apoptosis by favouring the activation of caspase-9/CASP9 and allowing apoptosome formation. In addition, plays a role in the modulation of histone acetylation and transcription as part of the INHAT (inhibitor of histone acetyltransferases) complex. Inhibits the histone-acetyltranferase activity of EP300/CREBBP (CREB-binding protein) and EP300/CREBBP-associated factor by histone masking. Preferentially binds to unmodified histone H3 and sterically inhibiting its acetylation and phosphorylation leading to cell growth inhibition. Participates in other biochemical processes such as regulation of mRNA nuclear-to-cytoplasmic translocation and stability by its association with ELAVL1 (Hu-antigen R). Plays a role in E4F1-mediated transcriptional repression as well as inhibition of protein phosphatase 2A. This chain is Acidic leucine-rich nuclear phosphoprotein 32 family member A (Anp32a), found in Rattus norvegicus (Rat).